A 113-amino-acid polypeptide reads, in one-letter code: T cell receptor alpha variable 12-2 (113 aa).

Residues 1-20 (MKSLRVLLVILWLQLSWVWS) form the signal peptide. Residues 23–113 (KEVEQNSGPL…DSATYLCAVN (91 aa)) enclose the Ig-like domain. The N-linked (GlcNAc...) asparagine glycan is linked to Asn-43. Cys-44 and Cys-110 are disulfide-bonded.

Alpha-beta TR is a heterodimer composed of an alpha and beta chain; disulfide-linked. The alpha-beta TR is associated with the transmembrane signaling CD3 coreceptor proteins to form the TR-CD3 (TcR or TCR). The assembly of alpha-beta TR heterodimers with CD3 occurs in the endoplasmic reticulum where a single alpha-beta TR heterodimer associates with one CD3D-CD3E heterodimer, one CD3G-CD3E heterodimer and one CD247 homodimer forming a stable octameric structure. CD3D-CD3E and CD3G-CD3E heterodimers preferentially associate with TR alpha and TR beta chains, respectively. The association of the CD247 homodimer is the last step of TcR assembly in the endoplasmic reticulum and is required for transport to the cell surface.

Its subcellular location is the cell membrane. Functionally, v region of the variable domain of T cell receptor (TR) alpha chain that participates in the antigen recognition. Alpha-beta T cell receptors are antigen specific receptors which are essential to the immune response and are present on the cell surface of T lymphocytes. Recognize peptide-major histocompatibility (MH) (pMH) complexes that are displayed by antigen presenting cells (APC), a prerequisite for efficient T cell adaptive immunity against pathogens. Binding of alpha-beta TR to pMH complex initiates TR-CD3 clustering on the cell surface and intracellular activation of LCK that phosphorylates the ITAM motifs of CD3G, CD3D, CD3E and CD247 enabling the recruitment of ZAP70. In turn ZAP70 phosphorylates LAT, which recruits numerous signaling molecules to form the LAT signalosome. The LAT signalosome propagates signal branching to three major signaling pathways, the calcium, the mitogen-activated protein kinase (MAPK) kinase and the nuclear factor NF-kappa-B (NF-kB) pathways, leading to the mobilization of transcription factors that are critical for gene expression and essential for T cell growth and differentiation. The T cell repertoire is generated in the thymus, by V-(D)-J rearrangement. This repertoire is then shaped by intrathymic selection events to generate a peripheral T cell pool of self-MH restricted, non-autoaggressive T cells. Post-thymic interaction of alpha-beta TR with the pMH complexes shapes TR structural and functional avidity. The chain is T cell receptor alpha variable 12-2 from Homo sapiens (Human).